The sequence spans 47 residues: Putative protein PinH (47 aa).

The Resolvase/invertase-type recombinase catalytic domain occupies 1 to 47 (MWHLVVLLEELCERGINFRALAQSIFAQQWGDECCKSKTICDLKVIV).

This sequence belongs to the site-specific recombinase resolvase family.

This Escherichia coli (strain K12) protein is Putative protein PinH (pinH).